The following is a 296-amino-acid chain: MSITSIRALLRSAVSLARTKPLRFTNLKDIKLRPPIPPTVENFQVSPDHPLWQFFPEGNQTTNAIREQDDLDHDSREWTSAELRQKSFEDLHRLWYIILKERNILAREVRLAESIGMRDVKQFNNIDYKLIKSLRRIKQVLLERHIAFERSQASPSVQEEKNEYLEEFSERYLNAEGKEIEEMDEKLDRLQYAFFGIEPTMDIETLQDDIDVNFIKGMEYSSNLKAQKYNKLNPESELELPLRGPMEELPFLLFDVEDAVQQVKELRESGQSRELYKIETIPFLSKAIKSHLEGQE.

The transit peptide at 1 to 19 directs the protein to the mitochondrion; it reads MSITSIRALLRSAVSLART.

The protein belongs to the universal ribosomal protein uL29 family. In terms of assembly, component of the mitochondrial large ribosomal subunit. Mature mitochondrial ribosomes consist of a small (37S) and a large (54S) subunit. The 37S subunit contains at least 33 different proteins and 1 molecule of RNA (15S). The 54S subunit contains at least 45 different proteins and 1 molecule of RNA (21S).

It localises to the mitochondrion. In Lodderomyces elongisporus (strain ATCC 11503 / CBS 2605 / JCM 1781 / NBRC 1676 / NRRL YB-4239) (Yeast), this protein is Large ribosomal subunit protein uL29m (MRPL4).